The primary structure comprises 644 residues: Macrolide export ATP-binding/permease protein MacB (644 aa).

In terms of domain architecture, ABC transporter spans 4–242 (IECKNINRYF…SNVGRIQEKA (239 aa)). ATP is bound at residue 40 to 47 (GQSGSGKS). 4 consecutive transmembrane segments (helical) span residues 270-290 (LLTM…VALG), 524-544 (IALI…LVSV), 574-594 (LICI…SLVF), and 607-627 (AASV…FGFM).

It belongs to the ABC transporter superfamily. Macrolide exporter (TC 3.A.1.122) family. In terms of assembly, homodimer.

It localises to the cell inner membrane. Its function is as follows. Non-canonical ABC transporter that contains transmembrane domains (TMD), which form a pore in the inner membrane, and an ATP-binding domain (NBD), which is responsible for energy generation. Overexpression confers resistance against macrolides. The polypeptide is Macrolide export ATP-binding/permease protein MacB (Neisseria gonorrhoeae).